A 329-amino-acid chain; its full sequence is MSAETGSRAPHIPVLLEEVVAALDPKPGDLIVDATFGAGGYTRRLLDAGATVHAFDRDPDAIAAGKLWGETCGKEPRLVLHPRRFSEIAEGLAEAGIAGVQGVVFDIGVSSMQLDQAARGFAFSSDGPLDMRMSQEGPSAADFLNEADEGEIADVLYRYGEERQSRRIARAIVAARPLTTTAQFAAVVRKALGYRPDIKGPKAPKDPATRSFQAVRIHVNGELDELVQGLAAAEKVLVPGGRIAVVSFHSLEDRIVKQFLREGAGAVPAGSRHLPQLESKVQAVFEKPSGAIRPTPEEEARNPRARSATLRCAVRTAAPARAHQGRAAA.

S-adenosyl-L-methionine is bound by residues 39–41, aspartate 56, phenylalanine 85, aspartate 106, and glutamine 113; that span reads GGY. The segment at 289 to 308 is disordered; it reads SGAIRPTPEEEARNPRARSA.

This sequence belongs to the methyltransferase superfamily. RsmH family.

It is found in the cytoplasm. The enzyme catalyses cytidine(1402) in 16S rRNA + S-adenosyl-L-methionine = N(4)-methylcytidine(1402) in 16S rRNA + S-adenosyl-L-homocysteine + H(+). Its function is as follows. Specifically methylates the N4 position of cytidine in position 1402 (C1402) of 16S rRNA. This is Ribosomal RNA small subunit methyltransferase H from Novosphingobium aromaticivorans (strain ATCC 700278 / DSM 12444 / CCUG 56034 / CIP 105152 / NBRC 16084 / F199).